A 394-amino-acid polypeptide reads, in one-letter code: Phosphopentomutase (394 aa).

The Mn(2+) site is built by Asp13, Asp286, His291, Asp327, His328, and His339.

This sequence belongs to the phosphopentomutase family. Mn(2+) serves as cofactor.

The protein localises to the cytoplasm. The enzyme catalyses 2-deoxy-alpha-D-ribose 1-phosphate = 2-deoxy-D-ribose 5-phosphate. It carries out the reaction alpha-D-ribose 1-phosphate = D-ribose 5-phosphate. It participates in carbohydrate degradation; 2-deoxy-D-ribose 1-phosphate degradation; D-glyceraldehyde 3-phosphate and acetaldehyde from 2-deoxy-alpha-D-ribose 1-phosphate: step 1/2. In terms of biological role, isomerase that catalyzes the conversion of deoxy-ribose 1-phosphate (dRib-1-P) and ribose 1-phosphate (Rib-1-P) to deoxy-ribose 5-phosphate (dRib-5-P) and ribose 5-phosphate (Rib-5-P), respectively. The protein is Phosphopentomutase of Bacillus mycoides (strain KBAB4) (Bacillus weihenstephanensis).